The sequence spans 86 residues: Cytochrome c oxidase subunit 6B1 (86 aa).

Alanine 2 is subject to N-acetylalanine. A CHCH domain is found at 27–73 (TRNCWQNYLDFHRCEKAMTAKGGDVSVCEWYRRVYKSLCPISWVSTW). Residues 30–40 (CWQNYLDFHRC) carry the Cx9C motif motif. 2 disulfide bridges follow: cysteine 30/cysteine 65 and cysteine 40/cysteine 54. The short motif at 54 to 65 (CEWYRRVYKSLC) is the Cx10C motif element. Position 62 is an N6-acetyllysine (lysine 62).

It belongs to the cytochrome c oxidase subunit 6B family. Component of the cytochrome c oxidase (complex IV, CIV), a multisubunit enzyme composed of 14 subunits. The complex is composed of a catalytic core of 3 subunits MT-CO1, MT-CO2 and MT-CO3, encoded in the mitochondrial DNA, and 11 supernumerary subunits COX4I1 (or COX4I2), COX5A, COX5B, COX6A2 (or COX6A1), COX6B1 (or COX6B2), COX6C, COX7A1 (or COX7A2), COX7B, COX7C, COX8B and NDUFA4, which are encoded in the nuclear genome. The complex exists as a monomer or a dimer and forms supercomplexes (SCs) in the inner mitochondrial membrane with NADH-ubiquinone oxidoreductase (complex I, CI) and ubiquinol-cytochrome c oxidoreductase (cytochrome b-c1 complex, complex III, CIII), resulting in different assemblies (supercomplex SCI(1)III(2)IV(1) and megacomplex MCI(2)III(2)IV(2)).

It localises to the mitochondrion inner membrane. It participates in energy metabolism; oxidative phosphorylation. In terms of biological role, component of the cytochrome c oxidase, the last enzyme in the mitochondrial electron transport chain which drives oxidative phosphorylation. The respiratory chain contains 3 multisubunit complexes succinate dehydrogenase (complex II, CII), ubiquinol-cytochrome c oxidoreductase (cytochrome b-c1 complex, complex III, CIII) and cytochrome c oxidase (complex IV, CIV), that cooperate to transfer electrons derived from NADH and succinate to molecular oxygen, creating an electrochemical gradient over the inner membrane that drives transmembrane transport and the ATP synthase. Cytochrome c oxidase is the component of the respiratory chain that catalyzes the reduction of oxygen to water. Electrons originating from reduced cytochrome c in the intermembrane space (IMS) are transferred via the dinuclear copper A center (CU(A)) of subunit 2 and heme A of subunit 1 to the active site in subunit 1, a binuclear center (BNC) formed by heme A3 and copper B (CU(B)). The BNC reduces molecular oxygen to 2 water molecules using 4 electrons from cytochrome c in the IMS and 4 protons from the mitochondrial matrix. The polypeptide is Cytochrome c oxidase subunit 6B1 (COX6B1) (Bos taurus (Bovine)).